The chain runs to 1040 residues: Multidrug resistance protein MdtB (1040 aa).

Helical transmembrane passes span 15-37 (LFIL…GIIG), 343-365 (VQFE…LRNA), 369-391 (LIPS…FLGF), 398-420 (LMAL…ENIA), 440-462 (IGFT…LFMG), 474-496 (VTLA…MMCA), 535-557 (HPWL…YIWI), 867-889 (VWLI…ESFI), 909-931 (LMMA…IGIV), 968-990 (ILMT…GVGA), and 1000-1022 (MVGG…YLLF).

Belongs to the resistance-nodulation-cell division (RND) (TC 2.A.6) family. MdtB subfamily. Part of a tripartite efflux system composed of MdtA, MdtB and MdtC. MdtB forms a heteromultimer with MdtC.

Its subcellular location is the cell inner membrane. The protein is Multidrug resistance protein MdtB of Pectobacterium atrosepticum (strain SCRI 1043 / ATCC BAA-672) (Erwinia carotovora subsp. atroseptica).